The primary structure comprises 356 residues: Nicotinate-nucleotide--dimethylbenzimidazole phosphoribosyltransferase (356 aa).

The active-site Proton acceptor is Glu317.

The protein belongs to the CobT family. In terms of assembly, homodimer.

The enzyme catalyses 5,6-dimethylbenzimidazole + nicotinate beta-D-ribonucleotide = alpha-ribazole 5'-phosphate + nicotinate + H(+). It participates in nucleoside biosynthesis; alpha-ribazole biosynthesis; alpha-ribazole from 5,6-dimethylbenzimidazole: step 1/2. Its function is as follows. Catalyzes the synthesis of alpha-ribazole-5'-phosphate from nicotinate mononucleotide (NAMN) and 5,6-dimethylbenzimidazole (DMB). In Salmonella paratyphi C (strain RKS4594), this protein is Nicotinate-nucleotide--dimethylbenzimidazole phosphoribosyltransferase.